A 641-amino-acid chain; its full sequence is XK-related protein 6 (641 aa).

2 disordered regions span residues 20–47 (LDEA…DGSE) and 84–120 (RSAA…PPPP). Gly residues predominate over residues 34–46 (PGGGGCGGGGDGS). The span at 107–120 (PPTPSAARPEPPPP) shows a compositional bias: pro residues. 7 helical membrane-spanning segments follow: residues 130–150 (LWIV…LWLA), 159–179 (YVYF…VQSL), 318–338 (TLPC…LASY), 372–392 (VISF…FVVV), 413–433 (WEEI…WFNV), 442–462 (MFAY…LWYF), and 473–493 (AVPA…MMLL).

Belongs to the XK family.

The protein resides in the cell membrane. The chain is XK-related protein 6 from Homo sapiens (Human).